A 449-amino-acid polypeptide reads, in one-letter code: Putative F-box/LRR-repeat protein 23 (449 aa).

LRR repeat units follow at residues 14–37 and 39–64; these read KLWR…HLKL and GNGL…DLRR. The F-box domain maps to 178-225; sequence LRNWAELPSKLTSSILLRLGAIEILQNAQKVCKPWHRVCKDPSMWRKI. 6 LRR repeats span residues 261-286, 287-311, 312-337, 344-367, 369-394, and 401-427; these read WYYG…GLVR, CFPI…LEVS, YCLF…KLNR, SNSG…HLQL, GNGL…DLRQ, and VGDL…DSDD.

The protein is Putative F-box/LRR-repeat protein 23 (FBL23) of Arabidopsis thaliana (Mouse-ear cress).